Here is a 278-residue protein sequence, read N- to C-terminus: 2-dehydro-3-deoxyphosphooctonate aldolase (278 aa).

It belongs to the KdsA family.

It localises to the cytoplasm. The enzyme catalyses D-arabinose 5-phosphate + phosphoenolpyruvate + H2O = 3-deoxy-alpha-D-manno-2-octulosonate-8-phosphate + phosphate. The protein operates within carbohydrate biosynthesis; 3-deoxy-D-manno-octulosonate biosynthesis; 3-deoxy-D-manno-octulosonate from D-ribulose 5-phosphate: step 2/3. It participates in bacterial outer membrane biogenesis; lipopolysaccharide biosynthesis. This chain is 2-dehydro-3-deoxyphosphooctonate aldolase, found in Dechloromonas aromatica (strain RCB).